Here is a 377-residue protein sequence, read N- to C-terminus: MSFMEALKDLRSEIDSLDRELIQLFAKRLELVSQVGKVKHQHGLPIYAPEREIAMLQARRLEAEKAGISADLIEDVLRRFMRESYANENQFGFKTINSDIHKIVIVGGYGKLGGLFARYLRASGYPISILDREDWAVAESILANADVVIVSVPINLTLETIERLKPYLTENMLLADLTSVKREPLAKMLEVHTGAVLGLHPMFGADIASMAKQVVVRCDGRFPERYEWLLEQIQIWGAKIYQTNATEHDHNMTYIQALRHFSTFANGLHLSKQPINLANLLALSSPIYRLELAMIGRLFAQDAELYADIIMDKSENLAVIETLKQTYDEALTFFENNDRQGFIDAFHKVRDWFGDYSEQFLKESRQLLQQANDLKQG.

The region spanning 1 to 92 (MSFMEALKDL…ESYANENQFG (92 aa)) is the Chorismate mutase domain. The 264-residue stretch at 101–364 (HKIVIVGGYG…DYSEQFLKES (264 aa)) folds into the Prephenate/arogenate dehydrogenase domain.

In the C-terminal section; belongs to the prephenate/arogenate dehydrogenase family.

The protein localises to the cytoplasm. The enzyme catalyses chorismate = prephenate. The catalysed reaction is prephenate + NAD(+) = 3-(4-hydroxyphenyl)pyruvate + CO2 + NADH. It participates in amino-acid biosynthesis; L-tyrosine biosynthesis; (4-hydroxyphenyl)pyruvate from prephenate (NAD(+) route): step 1/1. It functions in the pathway metabolic intermediate biosynthesis; prephenate biosynthesis; prephenate from chorismate: step 1/1. This Haemophilus influenzae (strain ATCC 51907 / DSM 11121 / KW20 / Rd) protein is T-protein (tyrA).